Reading from the N-terminus, the 482-residue chain is UDP-N-acetylmuramate--L-alanine ligase (482 aa).

123–129 (GTHGKTT) is a binding site for ATP.

Belongs to the MurCDEF family.

Its subcellular location is the cytoplasm. It carries out the reaction UDP-N-acetyl-alpha-D-muramate + L-alanine + ATP = UDP-N-acetyl-alpha-D-muramoyl-L-alanine + ADP + phosphate + H(+). Its pathway is cell wall biogenesis; peptidoglycan biosynthesis. Functionally, cell wall formation. In Pseudomonas putida (strain GB-1), this protein is UDP-N-acetylmuramate--L-alanine ligase.